We begin with the raw amino-acid sequence, 465 residues long: Cytochrome P450 85A1 (465 aa).

Residues 2-22 traverse the membrane as a helical segment; it reads GAMMVMMGLLLIIVSLCSALL. C415 serves as a coordination point for heme.

It belongs to the cytochrome P450 family. Heme serves as cofactor. In terms of tissue distribution, mainly expressed in apical shoots, hypocotyls, siliques and roots. Also present in the female gametophyte.

Its subcellular location is the membrane. It carries out the reaction 6-deoxoteasterone + reduced [NADPH--hemoprotein reductase] + O2 = 6alpha-hydroxyteasterone + oxidized [NADPH--hemoprotein reductase] + H2O + H(+). The enzyme catalyses 6alpha-hydroxytyphasterol + reduced [NADPH--hemoprotein reductase] + O2 = teasterone + oxidized [NADPH--hemoprotein reductase] + 2 H2O + H(+). The catalysed reaction is 3-dehydro-6-deoxoteasterone + reduced [NADPH--hemoprotein reductase] + O2 = 3-dehydro-6alpha-hydroxyteasterone + oxidized [NADPH--hemoprotein reductase] + H2O + H(+). It catalyses the reaction 3-dehydro-6alpha-hydroxyteasterone + reduced [NADPH--hemoprotein reductase] + O2 = 3-dehydroteasterone + oxidized [NADPH--hemoprotein reductase] + 2 H2O + H(+). It carries out the reaction 6-deoxotyphasterol + reduced [NADPH--hemoprotein reductase] + O2 = 6alpha-hydroxytyphasterol + oxidized [NADPH--hemoprotein reductase] + H2O + H(+). The enzyme catalyses 6alpha-hydroxytyphasterol + reduced [NADPH--hemoprotein reductase] + O2 = typhasterol + oxidized [NADPH--hemoprotein reductase] + 2 H2O + H(+). The catalysed reaction is 6-deoxocastasterone + reduced [NADPH--hemoprotein reductase] + O2 = 6alpha-hydroxycastasterone + oxidized [NADPH--hemoprotein reductase] + H2O + H(+). It catalyses the reaction 6alpha-hydroxycastasterone + reduced [NADPH--hemoprotein reductase] + O2 = castasterone + oxidized [NADPH--hemoprotein reductase] + 2 H2O + H(+). It carries out the reaction 6-deoxocastasterone + 2 reduced [NADPH--hemoprotein reductase] + 2 O2 = castasterone + 2 oxidized [NADPH--hemoprotein reductase] + 3 H2O + 2 H(+). The enzyme catalyses 6-deoxoteasterone + 2 reduced [NADPH--hemoprotein reductase] + 2 O2 = teasterone + 2 oxidized [NADPH--hemoprotein reductase] + 3 H2O + 2 H(+). The catalysed reaction is 6-deoxotyphasterol + 2 reduced [NADPH--hemoprotein reductase] + 2 O2 = typhasterol + 2 oxidized [NADPH--hemoprotein reductase] + 3 H2O + 2 H(+). It catalyses the reaction 3-dehydro-6-deoxoteasterone + 2 reduced [NADPH--hemoprotein reductase] + 2 O2 = 3-dehydroteasterone + 2 oxidized [NADPH--hemoprotein reductase] + 3 H2O + 2 H(+). It functions in the pathway plant hormone biosynthesis; brassinosteroid biosynthesis. Its function is as follows. Catalyzes the C6-oxidation step in brassinosteroids biosynthesis. Converts 6-deoxocastasterone (6-deoxoCS) to castasterone (CS). May also convert 6-deoxoteasterone (6-deoxoTE) to teasterone (TE), 3-dehydro-6-deoxoteasterone (6-deoxo3DT, 6-deoxo-3-DHT) to 3-dehydroteasterone (3DT, 3-DHT), and 6-deoxotyphasterol (6-deoxoTY) to typhasterol (TY). Required for the initiation of female gametogenesis (megagametogenesis). The polypeptide is Cytochrome P450 85A1 (Arabidopsis thaliana (Mouse-ear cress)).